A 211-amino-acid chain; its full sequence is tRNA (guanine-N(7)-)-methyltransferase (211 aa).

S-adenosyl-L-methionine is bound by residues E44, D69, D96, and D118. The active site involves D118. K122 contacts substrate. Positions 124-129 (KHEKRR) are interaction with RNA. Substrate contacts are provided by residues D154 and 191–194 (TEYE).

It belongs to the class I-like SAM-binding methyltransferase superfamily. TrmB family.

The enzyme catalyses guanosine(46) in tRNA + S-adenosyl-L-methionine = N(7)-methylguanosine(46) in tRNA + S-adenosyl-L-homocysteine. Its pathway is tRNA modification; N(7)-methylguanine-tRNA biosynthesis. Functionally, catalyzes the formation of N(7)-methylguanine at position 46 (m7G46) in tRNA. The polypeptide is tRNA (guanine-N(7)-)-methyltransferase (Streptococcus pyogenes serotype M18 (strain MGAS8232)).